We begin with the raw amino-acid sequence, 380 residues long: Cytochrome b (380 aa).

4 consecutive transmembrane segments (helical) span residues 34-54 (FGSL…LLAM), 78-99 (WLIR…FLHI), 114-134 (WNTG…GYVL), and 179-199 (FFAL…THLM). Residues H84 and H98 each coordinate heme b. The heme b site is built by H183 and H197. Residue H202 coordinates a ubiquinone. Transmembrane regions (helical) follow at residues 227–247 (LKDI…ALFS), 289–309 (LGGV…PFLH), 321–341 (LSQT…WVGS), and 348–368 (FIII…ILFP).

Belongs to the cytochrome b family. In terms of assembly, the cytochrome bc1 complex contains 11 subunits: 3 respiratory subunits (MT-CYB, CYC1 and UQCRFS1), 2 core proteins (UQCRC1 and UQCRC2) and 6 low-molecular weight proteins (UQCRH/QCR6, UQCRB/QCR7, UQCRQ/QCR8, UQCR10/QCR9, UQCR11/QCR10 and a cleavage product of UQCRFS1). This cytochrome bc1 complex then forms a dimer. Requires heme b as cofactor.

Its subcellular location is the mitochondrion inner membrane. In terms of biological role, component of the ubiquinol-cytochrome c reductase complex (complex III or cytochrome b-c1 complex) that is part of the mitochondrial respiratory chain. The b-c1 complex mediates electron transfer from ubiquinol to cytochrome c. Contributes to the generation of a proton gradient across the mitochondrial membrane that is then used for ATP synthesis. This is Cytochrome b (MT-CYB) from Tragopan satyra (Satyr tragopan).